A 154-amino-acid chain; its full sequence is 6,7-dimethyl-8-ribityllumazine synthase (154 aa).

Residues phenylalanine 22, 56–58 (AFE), and 80–82 (AVI) contribute to the 5-amino-6-(D-ribitylamino)uracil site. 85 to 86 (AT) is a binding site for (2S)-2-hydroxy-3-oxobutyl phosphate. Catalysis depends on histidine 88, which acts as the Proton donor. Phenylalanine 113 provides a ligand contact to 5-amino-6-(D-ribitylamino)uracil. Arginine 127 lines the (2S)-2-hydroxy-3-oxobutyl phosphate pocket.

This sequence belongs to the DMRL synthase family. As to quaternary structure, forms an icosahedral capsid composed of 60 subunits, arranged as a dodecamer of pentamers.

The catalysed reaction is (2S)-2-hydroxy-3-oxobutyl phosphate + 5-amino-6-(D-ribitylamino)uracil = 6,7-dimethyl-8-(1-D-ribityl)lumazine + phosphate + 2 H2O + H(+). Its pathway is cofactor biosynthesis; riboflavin biosynthesis; riboflavin from 2-hydroxy-3-oxobutyl phosphate and 5-amino-6-(D-ribitylamino)uracil: step 1/2. Functionally, catalyzes the formation of 6,7-dimethyl-8-ribityllumazine by condensation of 5-amino-6-(D-ribitylamino)uracil with 3,4-dihydroxy-2-butanone 4-phosphate. This is the penultimate step in the biosynthesis of riboflavin. The chain is 6,7-dimethyl-8-ribityllumazine synthase from Geobacillus sp. (strain WCH70).